We begin with the raw amino-acid sequence, 130 residues long: Large ribosomal subunit protein uL14 (130 aa).

The protein belongs to the universal ribosomal protein uL14 family. In terms of assembly, part of the 50S ribosomal subunit. Forms a cluster with proteins L3 and L19. In the 70S ribosome, L14 and L19 interact and together make contacts with the 16S rRNA in bridges B5 and B8.

Binds to 23S rRNA. Forms part of two intersubunit bridges in the 70S ribosome. This chain is Large ribosomal subunit protein uL14, found in Helicobacter pylori (strain P12).